A 194-amino-acid polypeptide reads, in one-letter code: Peptidyl-tRNA hydrolase (194 aa).

TRNA is bound at residue Tyr-17. The Proton acceptor role is filled by His-22. Tyr-69, Asn-71, and Asn-117 together coordinate tRNA.

The protein belongs to the PTH family. In terms of assembly, monomer.

Its subcellular location is the cytoplasm. The catalysed reaction is an N-acyl-L-alpha-aminoacyl-tRNA + H2O = an N-acyl-L-amino acid + a tRNA + H(+). Functionally, hydrolyzes ribosome-free peptidyl-tRNAs (with 1 or more amino acids incorporated), which drop off the ribosome during protein synthesis, or as a result of ribosome stalling. Its function is as follows. Catalyzes the release of premature peptidyl moieties from peptidyl-tRNA molecules trapped in stalled 50S ribosomal subunits, and thus maintains levels of free tRNAs and 50S ribosomes. The protein is Peptidyl-tRNA hydrolase of Arthrobacter sp. (strain FB24).